The sequence spans 170 residues: Neurotensin/neuromedin N (170 aa).

A signal peptide spans 1 to 23; sequence MMAGMKIQLVCMILLAFSSWSLC.

Belongs to the neurotensin family. Interacts with NTSR1. Interacts with SORT1. Interacts with SORL1. Post-translationally, neurotensin is cleaved and degraded by Angiotensin-converting enzyme (ACE) and neprilysin (MME).

It localises to the secreted. The protein resides in the cytoplasmic vesicle. It is found in the secretory vesicle. Functionally, neurotensin may play an endocrine or paracrine role in the regulation of fat metabolism. It causes contraction of smooth muscle. This Canis lupus familiaris (Dog) protein is Neurotensin/neuromedin N (NTS).